An 84-amino-acid polypeptide reads, in one-letter code: Toxin-like TcoNTxP1 (84 aa).

The N-terminal stretch at 1–19 (MKRMILFTSCLLLIDIVVG) is a signal peptide. In terms of domain architecture, LCN-type CS-alpha/beta spans 21–82 (KEGYPADSKG…VWDSATNKCG (62 aa)). 4 disulfides stabilise this stretch: cysteine 31/cysteine 81, cysteine 35/cysteine 57, cysteine 43/cysteine 62, and cysteine 47/cysteine 64. A Cysteine amide modification is found at cysteine 81. Residues 82 to 84 (GKK) constitute a propeptide that is removed on maturation.

As to expression, expressed by the venom gland.

It localises to the secreted. This protein is not toxic. It induces an immune response similar to that induced by whole venom. Thus, polyclonal antibodies raised against this protein can neutralize the effects of the venom. This is Toxin-like TcoNTxP1 from Tityus costatus (Brazilian scorpion).